Here is a 359-residue protein sequence, read N- to C-terminus: Phosphoserine aminotransferase (359 aa).

Position 41 (Arg41) interacts with L-glutamate. Pyridoxal 5'-phosphate is bound by residues Trp101, Thr151, Asp170, and Gln193. Lys194 bears the N6-(pyridoxal phosphate)lysine mark. 235–236 (NT) contributes to the pyridoxal 5'-phosphate binding site.

The protein belongs to the class-V pyridoxal-phosphate-dependent aminotransferase family. SerC subfamily. In terms of assembly, homodimer. Pyridoxal 5'-phosphate is required as a cofactor.

Its subcellular location is the cytoplasm. The enzyme catalyses O-phospho-L-serine + 2-oxoglutarate = 3-phosphooxypyruvate + L-glutamate. The catalysed reaction is 4-(phosphooxy)-L-threonine + 2-oxoglutarate = (R)-3-hydroxy-2-oxo-4-phosphooxybutanoate + L-glutamate. Its pathway is amino-acid biosynthesis; L-serine biosynthesis; L-serine from 3-phospho-D-glycerate: step 2/3. It participates in cofactor biosynthesis; pyridoxine 5'-phosphate biosynthesis; pyridoxine 5'-phosphate from D-erythrose 4-phosphate: step 3/5. In terms of biological role, catalyzes the reversible conversion of 3-phosphohydroxypyruvate to phosphoserine and of 3-hydroxy-2-oxo-4-phosphonooxybutanoate to phosphohydroxythreonine. This is Phosphoserine aminotransferase from Laribacter hongkongensis (strain HLHK9).